Here is a 482-residue protein sequence, read N- to C-terminus: Variant surface glycoprotein ANTAT 1.1C (482 aa).

Residues 1–8 (LHPQQALA) form the signal peptide. 2 disulfide bridges follow: Cys24-Cys151 and Cys133-Cys188. N-linked (GlcNAc...) asparagine glycosylation is present at Asn92. 2 N-linked (GlcNAc...) asparagine glycosylation sites follow: Asn398 and Asn411. Asp459 is lipidated: GPI-anchor amidated aspartate. The propeptide at 460 to 482 (SSILVTKKFALSLVSAAFASLLF) is removed in mature form.

The protein resides in the cell membrane. VSG forms a coat on the surface of the parasite. The trypanosome evades the immune response of the host by expressing a series of antigenically distinct VSGs from an estimated 1000 VSG genes. This is Variant surface glycoprotein ANTAT 1.1C from Trypanosoma brucei brucei.